Consider the following 155-residue polypeptide: Ribosomal RNA large subunit methyltransferase H (155 aa).

S-adenosyl-L-methionine contacts are provided by residues L73, G104, and 123 to 128; that span reads LSPLTL.

It belongs to the RNA methyltransferase RlmH family. Homodimer.

The protein resides in the cytoplasm. The enzyme catalyses pseudouridine(1915) in 23S rRNA + S-adenosyl-L-methionine = N(3)-methylpseudouridine(1915) in 23S rRNA + S-adenosyl-L-homocysteine + H(+). In terms of biological role, specifically methylates the pseudouridine at position 1915 (m3Psi1915) in 23S rRNA. The polypeptide is Ribosomal RNA large subunit methyltransferase H (Ectopseudomonas mendocina (strain ymp) (Pseudomonas mendocina)).